The chain runs to 98 residues: NADH-ubiquinone oxidoreductase chain 4L (98 aa).

A run of 3 helical transmembrane segments spans residues 1-21 (MPVVYVNIFLAFIVSLTGLLI), 29-49 (SLLCLEGMMLSLFVMLTVTVL), and 61-81 (IILLVFAACEAALGLSLLVMV).

It belongs to the complex I subunit 4L family. In terms of assembly, core subunit of respiratory chain NADH dehydrogenase (Complex I) which is composed of 45 different subunits.

The protein resides in the mitochondrion inner membrane. The enzyme catalyses a ubiquinone + NADH + 5 H(+)(in) = a ubiquinol + NAD(+) + 4 H(+)(out). Its function is as follows. Core subunit of the mitochondrial membrane respiratory chain NADH dehydrogenase (Complex I) which catalyzes electron transfer from NADH through the respiratory chain, using ubiquinone as an electron acceptor. Part of the enzyme membrane arm which is embedded in the lipid bilayer and involved in proton translocation. The polypeptide is NADH-ubiquinone oxidoreductase chain 4L (MT-ND4L) (Helarctos malayanus (Malayan sun bear)).